We begin with the raw amino-acid sequence, 125 residues long: MAFDKDAFLTVLDSMTVLELNDLVKAIEEKFGVSAASMAAPAAGGGGAGAAVAEEKTEFNVVLLEAGAQKVQVIKAVRELTGLGLKEAKDLVDGAPKNVKEGANKADAEAAKKKLEDAGAKVELK.

It belongs to the bacterial ribosomal protein bL12 family. Homodimer. Part of the ribosomal stalk of the 50S ribosomal subunit. Forms a multimeric L10(L12)X complex, where L10 forms an elongated spine to which 2 to 4 L12 dimers bind in a sequential fashion. Binds GTP-bound translation factors.

Its function is as follows. Forms part of the ribosomal stalk which helps the ribosome interact with GTP-bound translation factors. Is thus essential for accurate translation. This is Large ribosomal subunit protein bL12 from Polaromonas naphthalenivorans (strain CJ2).